An 833-amino-acid polypeptide reads, in one-letter code: Probable serine/threonine-protein kinase DDB_G0277165 (833 aa).

The 254-residue stretch at 9–262 (FIIGKTLGQG…IKEIKEHPWF (254 aa)) folds into the Protein kinase domain. ATP contacts are provided by residues 15–23 (LGQGTTGKV) and K38. D133 serves as the catalytic Proton acceptor. The region spanning 288-329 (QIDEDIFRSLMALGVGTIDEVKQQLVSNQKSATLIYYRLLEE) is the UBA domain. A compositionally biased stretch (basic and acidic residues) spans 338–351 (NKYGYKPKETRRNS). Disordered stretches follow at residues 338 to 472 (NKYG…ISPS), 528 to 626 (QALQ…PIEI), and 764 to 799 (FINP…GGQN). 2 stretches are compositionally biased toward low complexity: residues 365–432 (NNNN…NNNN) and 441–459 (SSSQ…QIPS). The segment covering 460–472 (NSTSQESMQISPS) has biased composition (polar residues). A compositionally biased stretch (low complexity) spans 528–589 (QALQQHHQQQ…SSTSTSPQLS (62 aa)). A compositionally biased stretch (polar residues) spans 600–625 (GSMTASTNPATSPTMSHRGKTSSPIE).

This sequence belongs to the protein kinase superfamily. CAMK Ser/Thr protein kinase family.

It carries out the reaction L-seryl-[protein] + ATP = O-phospho-L-seryl-[protein] + ADP + H(+). The catalysed reaction is L-threonyl-[protein] + ATP = O-phospho-L-threonyl-[protein] + ADP + H(+). The protein is Probable serine/threonine-protein kinase DDB_G0277165 of Dictyostelium discoideum (Social amoeba).